The chain runs to 285 residues: MVAKILDGKQIAKDYRQGLQDQVEALKEKGYTPKLSVILVGNNGASLSYVKSKKKAAEKIGMISEIVHLEETATEEEVLNELERLNNDDSVSGILVQVPLPSQVSEQKVLEAINPEKDVDGFHPQNIGKLYIDEQTFVPCTPLGIMELLKNADIDLDGKDAVVIGRSHIVGQPVSKLLIQQNATVTILHSHSKDMSKYLKEADVIVSAVGKPGLVTKEDVKEGAVVIDVGNTPDENGKLKGDVEYEDVKEVAGAITPVPGGVGPMTITMVLNNTLLAEKMRRGLE.

NADP(+) contacts are provided by residues 165–167 (GRS) and serine 190.

This sequence belongs to the tetrahydrofolate dehydrogenase/cyclohydrolase family. In terms of assembly, homodimer.

It catalyses the reaction (6R)-5,10-methylene-5,6,7,8-tetrahydrofolate + NADP(+) = (6R)-5,10-methenyltetrahydrofolate + NADPH. The enzyme catalyses (6R)-5,10-methenyltetrahydrofolate + H2O = (6R)-10-formyltetrahydrofolate + H(+). It participates in one-carbon metabolism; tetrahydrofolate interconversion. Functionally, catalyzes the oxidation of 5,10-methylenetetrahydrofolate to 5,10-methenyltetrahydrofolate and then the hydrolysis of 5,10-methenyltetrahydrofolate to 10-formyltetrahydrofolate. This is Bifunctional protein FolD from Staphylococcus carnosus (strain TM300).